We begin with the raw amino-acid sequence, 445 residues long: Putative U-box domain-containing protein 47 (445 aa).

Residues 64–137 (EVPKEFICTL…KEWCLIHNFD (74 aa)) enclose the U-box domain.

It catalyses the reaction S-ubiquitinyl-[E2 ubiquitin-conjugating enzyme]-L-cysteine + [acceptor protein]-L-lysine = [E2 ubiquitin-conjugating enzyme]-L-cysteine + N(6)-ubiquitinyl-[acceptor protein]-L-lysine.. It functions in the pathway protein modification; protein ubiquitination. Functionally, functions as an E3 ubiquitin ligase. In Arabidopsis thaliana (Mouse-ear cress), this protein is Putative U-box domain-containing protein 47 (PUB47).